The following is a 479-amino-acid chain: Aspartyl/glutamyl-tRNA(Asn/Gln) amidotransferase subunit B (479 aa).

It belongs to the GatB/GatE family. GatB subfamily. As to quaternary structure, heterotrimer of A, B and C subunits.

The catalysed reaction is L-glutamyl-tRNA(Gln) + L-glutamine + ATP + H2O = L-glutaminyl-tRNA(Gln) + L-glutamate + ADP + phosphate + H(+). The enzyme catalyses L-aspartyl-tRNA(Asn) + L-glutamine + ATP + H2O = L-asparaginyl-tRNA(Asn) + L-glutamate + ADP + phosphate + 2 H(+). Functionally, allows the formation of correctly charged Asn-tRNA(Asn) or Gln-tRNA(Gln) through the transamidation of misacylated Asp-tRNA(Asn) or Glu-tRNA(Gln) in organisms which lack either or both of asparaginyl-tRNA or glutaminyl-tRNA synthetases. The reaction takes place in the presence of glutamine and ATP through an activated phospho-Asp-tRNA(Asn) or phospho-Glu-tRNA(Gln). This Halorhodospira halophila (strain DSM 244 / SL1) (Ectothiorhodospira halophila (strain DSM 244 / SL1)) protein is Aspartyl/glutamyl-tRNA(Asn/Gln) amidotransferase subunit B.